A 142-amino-acid polypeptide reads, in one-letter code: Large ribosomal subunit protein uL11 (142 aa).

Belongs to the universal ribosomal protein uL11 family. Part of the ribosomal stalk of the 50S ribosomal subunit. Interacts with L10 and the large rRNA to form the base of the stalk. L10 forms an elongated spine to which L12 dimers bind in a sequential fashion forming a multimeric L10(L12)X complex. In terms of processing, one or more lysine residues are methylated.

Forms part of the ribosomal stalk which helps the ribosome interact with GTP-bound translation factors. This is Large ribosomal subunit protein uL11 from Citrobacter koseri (strain ATCC BAA-895 / CDC 4225-83 / SGSC4696).